Consider the following 423-residue polypeptide: Serine hydroxymethyltransferase (423 aa).

(6S)-5,6,7,8-tetrahydrofolate-binding positions include Leu120 and 124–126; that span reads GHL. The residue at position 229 (Lys229) is an N6-(pyridoxal phosphate)lysine. 353–355 is a (6S)-5,6,7,8-tetrahydrofolate binding site; it reads SPF.

Belongs to the SHMT family. Homodimer. The cofactor is pyridoxal 5'-phosphate.

The protein localises to the cytoplasm. It carries out the reaction (6R)-5,10-methylene-5,6,7,8-tetrahydrofolate + glycine + H2O = (6S)-5,6,7,8-tetrahydrofolate + L-serine. The protein operates within one-carbon metabolism; tetrahydrofolate interconversion. Its pathway is amino-acid biosynthesis; glycine biosynthesis; glycine from L-serine: step 1/1. Its function is as follows. Catalyzes the reversible interconversion of serine and glycine with tetrahydrofolate (THF) serving as the one-carbon carrier. This reaction serves as the major source of one-carbon groups required for the biosynthesis of purines, thymidylate, methionine, and other important biomolecules. Also exhibits THF-independent aldolase activity toward beta-hydroxyamino acids, producing glycine and aldehydes, via a retro-aldol mechanism. The chain is Serine hydroxymethyltransferase from Synechococcus sp. (strain RCC307).